Reading from the N-terminus, the 82-residue chain is Progonadoliberin-3 (82 aa).

The first 23 residues, 1–23 (MDLSNRTVVQVVVLALVAQVTLS), serve as a signal peptide directing secretion. Glutamine 24 is modified (pyrrolidone carboxylic acid). Glycine amide is present on glycine 33.

This sequence belongs to the GnRH family. As to expression, brain.

The protein localises to the secreted. Its function is as follows. Stimulates the secretion of gonadotropins. The chain is Progonadoliberin-3 (gnrh3) from Oncorhynchus nerka (Sockeye salmon).